A 156-amino-acid chain; its full sequence is ATP synthase subunit b (156 aa).

The chain crosses the membrane as a helical span at residues 13-33 (AFIIFVWCCMKFVWPPLMAAI).

This sequence belongs to the ATPase B chain family. As to quaternary structure, F-type ATPases have 2 components, F(1) - the catalytic core - and F(0) - the membrane proton channel. F(1) has five subunits: alpha(3), beta(3), gamma(1), delta(1), epsilon(1). F(0) has three main subunits: a(1), b(2) and c(10-14). The alpha and beta chains form an alternating ring which encloses part of the gamma chain. F(1) is attached to F(0) by a central stalk formed by the gamma and epsilon chains, while a peripheral stalk is formed by the delta and b chains.

The protein resides in the cell inner membrane. Functionally, f(1)F(0) ATP synthase produces ATP from ADP in the presence of a proton or sodium gradient. F-type ATPases consist of two structural domains, F(1) containing the extramembraneous catalytic core and F(0) containing the membrane proton channel, linked together by a central stalk and a peripheral stalk. During catalysis, ATP synthesis in the catalytic domain of F(1) is coupled via a rotary mechanism of the central stalk subunits to proton translocation. In terms of biological role, component of the F(0) channel, it forms part of the peripheral stalk, linking F(1) to F(0). The sequence is that of ATP synthase subunit b from Aeromonas salmonicida (strain A449).